The following is a 62-amino-acid chain: uncharacterized protein (62 aa).

The segment at Tyr-17 to Asn-62 is disordered.

This is an uncharacterized protein from Dictyostelium discoideum (Social amoeba).